Reading from the N-terminus, the 434-residue chain is Trigger factor (434 aa).

One can recognise a PPIase FKBP-type domain in the interval 160 to 245 (GDKVKMNFVG…LTEVQAANLP (86 aa)).

The protein belongs to the FKBP-type PPIase family. Tig subfamily.

The protein localises to the cytoplasm. The enzyme catalyses [protein]-peptidylproline (omega=180) = [protein]-peptidylproline (omega=0). In terms of biological role, involved in protein export. Acts as a chaperone by maintaining the newly synthesized protein in an open conformation. Functions as a peptidyl-prolyl cis-trans isomerase. In Shewanella putrefaciens (strain CN-32 / ATCC BAA-453), this protein is Trigger factor.